The primary structure comprises 350 residues: Thymidine kinase (350 aa).

17-24 is a binding site for ATP; it reads GPFGIGKT. Glutamate 45 serves as the catalytic Proton acceptor. Glutamine 86 serves as a coordination point for substrate. Arginine 176 contacts ATP. Arginine 182 is a binding site for substrate.

Belongs to the herpesviridae thymidine kinase family. Homodimer.

The enzyme catalyses thymidine + ATP = dTMP + ADP + H(+). In terms of biological role, catalyzes the transfer of the gamma-phospho group of ATP to thymidine to generate dTMP in the salvage pathway of pyrimidine synthesis. The dTMP serves as a substrate for DNA polymerase during viral DNA replication. Allows the virus to be reactivated and to grow in non-proliferative cells lacking a high concentration of phosphorylated nucleic acid precursors. This Gallus gallus (Chicken) protein is Thymidine kinase.